We begin with the raw amino-acid sequence, 102 residues long: Class II hydrophobin 3 (102 aa).

Positions 1 to 16 (MQFLAVAALLFTTALA) are cleaved as a signal peptide. 4 disulfides stabilise this stretch: C33–C83, C44–C74, C45–C57, and C84–C95.

The protein belongs to the cerato-ulmin hydrophobin family. Homotetramer. Further self-assembles to form highly ordered films at water-air interfaces through intermolecular interactions. In terms of tissue distribution, expressed in the conidia, vegetative growth and induction growth stages.

Its subcellular location is the secreted. The protein localises to the cell wall. The protein resides in the cytoplasm. Aerial growth, conidiation, and dispersal of filamentous fungi in the environment rely upon a capability of their secreting small amphipathic proteins called hydrophobins (HPBs) with low sequence identity. Class I can self-assemble into an outermost layer of rodlet bundles on aerial cell surfaces, conferring cellular hydrophobicity that supports fungal growth, development and dispersal; whereas Class II form highly ordered films at water-air interfaces through intermolecular interactions but contribute nothing to the rodlet structure. Hbf3 is a class II hydrophobin that has a role in vegetative growth and asexual development. In Hypocrea jecorina (strain QM6a) (Trichoderma reesei), this protein is Class II hydrophobin 3.